The following is a 196-amino-acid chain: ATP-dependent Clp protease proteolytic subunit (196 aa).

Ser98 serves as the catalytic Nucleophile. His123 is a catalytic residue.

Belongs to the peptidase S14 family. Fourteen ClpP subunits assemble into 2 heptameric rings which stack back to back to give a disk-like structure with a central cavity, resembling the structure of eukaryotic proteasomes.

The protein localises to the cytoplasm. The catalysed reaction is Hydrolysis of proteins to small peptides in the presence of ATP and magnesium. alpha-casein is the usual test substrate. In the absence of ATP, only oligopeptides shorter than five residues are hydrolyzed (such as succinyl-Leu-Tyr-|-NHMec, and Leu-Tyr-Leu-|-Tyr-Trp, in which cleavage of the -Tyr-|-Leu- and -Tyr-|-Trp bonds also occurs).. In terms of biological role, cleaves peptides in various proteins in a process that requires ATP hydrolysis. Has a chymotrypsin-like activity. Plays a major role in the degradation of misfolded proteins. In Limosilactobacillus fermentum (strain NBRC 3956 / LMG 18251) (Lactobacillus fermentum), this protein is ATP-dependent Clp protease proteolytic subunit.